The primary structure comprises 317 residues: Gamma-glutamyl hydrolase (317 aa).

Positions 1-24 (MASLGRLLCAWVLLLCGLASPGLS) are cleaved as a signal peptide. The Gamma-glutamyl hydrolase domain maps to 25-317 (GSYERGSKRP…SSFQQAYMFN (293 aa)). N-linked (GlcNAc...) asparagine glycans are attached at residues Asn46 and Asn100. Cys133 serves as the catalytic Nucleophile. 4 N-linked (GlcNAc...) asparagine glycosylation sites follow: Asn153, Asn162, Asn188, and Asn202. His243 serves as the catalytic Proton donor. N-linked (GlcNAc...) asparagine glycosylation occurs at Asn306.

It belongs to the peptidase C26 family. As to quaternary structure, homodimer.

The protein resides in the secreted. Its subcellular location is the extracellular space. The protein localises to the lysosome. It is found in the melanosome. It carries out the reaction (6S)-5,6,7,8-tetrahydrofolyl-(gamma-L-Glu)(n) + (n-1) H2O = (6S)-5,6,7,8-tetrahydrofolate + (n-1) L-glutamate. Activity is altered by insulin and estrogen. Functionally, hydrolyzes the polyglutamate sidechains of pteroylpolyglutamates. Progressively removes gamma-glutamyl residues from pteroylpoly-gamma-glutamate to yield pteroyl-alpha-glutamate (folic acid) and free glutamate. May play an important role in the bioavailability of dietary pteroylpolyglutamates and in the metabolism of pteroylpolyglutamates and antifolates. Exhibits either endo- or exopeptidase activity depending upon the tissue of origin. When secreted, it acts primarily as an endopeptidase. In Rattus norvegicus (Rat), this protein is Gamma-glutamyl hydrolase (Ggh).